The sequence spans 544 residues: Chaperonin GroEL (544 aa).

Residues 29 to 32 (TLGP), K50, 86 to 90 (DGTTT), G414, 477 to 479 (DAA), and D493 each bind ATP.

It belongs to the chaperonin (HSP60) family. In terms of assembly, forms a cylinder of 14 subunits composed of two heptameric rings stacked back-to-back. Interacts with the co-chaperonin GroES.

The protein resides in the cytoplasm. The enzyme catalyses ATP + H2O + a folded polypeptide = ADP + phosphate + an unfolded polypeptide.. Together with its co-chaperonin GroES, plays an essential role in assisting protein folding. The GroEL-GroES system forms a nano-cage that allows encapsulation of the non-native substrate proteins and provides a physical environment optimized to promote and accelerate protein folding. This chain is Chaperonin GroEL, found in Hydrogenovibrio crunogenus (strain DSM 25203 / XCL-2) (Thiomicrospira crunogena).